Reading from the N-terminus, the 588-residue chain is MSTETELQVAVKTSAKKDSRKKGQDRSEATLIKRFKGEGVRYKAKLIGIDEVSAARGDKLCQDSMMKLKGVVAGARSKGEHKQKIFLTISFGGIKIFDEKTGALQHHHAVHEISYIAKDITDHRAFGYVCGKEGNHRFVAIKTAQAAEPVILDLRDLFQLIYELKQREELEKKAQKDKQCEQAVYQTILEEDVEDPVYQYIVFEAGHEPIRDPETEENIYQVPTSQKKEGVYDVPKSQPVSNGYSFEDFEERFAAATPNRNLPTDFDEIFEATKAVTQLELFGDMSTPPDITSPPTPATPGDAFIPSSSQTLPASADVFSSVPFGTAAVPSGYVAMGAVLPSFWGQQPLVQQQMVMGAQPPVAQVMPGAQPIAWGQPGLFPATQQPWPTVAGQFPPAAFMPTQTVMPLPAAMFQGPLTPLATVPGTSDSTRSSPQTDKPRQKMGKETFKDFQMAQPPPVPSRKPDQPSLTCTSEAFSSYFNKVGVAQDTDDCDDFDISQLNLTPVTSTTPSTNSPPTPAPRQSSPSKSSASHASDPTTDDIFEEGFESPSKSEEQEAPDGSQASSNSDPFGEPSGEPSGDNISPQAGS.

The segment at 1 to 26 is disordered; the sequence is MSTETELQVAVKTSAKKDSRKKGQDR. Residues 15-26 are compositionally biased toward basic and acidic residues; sequence AKKDSRKKGQDR. Positions 36 to 189 constitute a PID domain; the sequence is KGEGVRYKAK…CEQAVYQTIL (154 aa). Tyr-198, Tyr-220, and Tyr-232 each carry phosphotyrosine. 3 disordered regions span residues 417-443, 451-470, and 502-588; these read LTPL…RQKM, FQMA…PSLT, and LTPV…QAGS. Over residues 424–436 the composition is skewed to polar residues; it reads PGTSDSTRSSPQT. Low complexity-rich tracts occupy residues 503–512 and 520–534; these read TPVTSTTPST and PRQS…SHAS. Ser-524 carries the phosphoserine; by CDK5 modification. Over residues 537–546 the composition is skewed to acidic residues; it reads TTDDIFEEGF.

In terms of assembly, associates with the SH2 domains of SRC, FYN and ABL. Interacts (phosphorylated on tyrosine residues) with CRK and CRKL (via respective SH2 domain). Interacts with SIAH1, LRP8 and VLDLR. Interacts with LRP1. Interacts with APLP1 (via NPXY motif). Interacts with DAB2IP. Interacts with ZSWIM8. In terms of processing, phosphorylated by FYN on Tyr-198 and Tyr-220 upon reelin induction in embryonic neurons. Also phosphorylated on Ser-524 independently of reelin signaling. Ubiquitinated by various cullin-5-RING E3 ubiquitin-protein ligase complexes (ECS complexes) following ligand-binding and phosphorylation, leading to its degradation. Ubiquitinated by the ECS(SOCS7) complex in the cortical plate of the developing cerebral cortex following ligand-binding and phosphorylation by FYN, leading to its degradation by the proteasome. Recognized by ZSWIM8 through a disorder targets misorder mechanism that eliminates misfolded DAB1 via ubiquitination and proteasomal degradation. As to expression, mainly expressed in brain.

Its subcellular location is the cytoplasm. Functionally, signaling adapter of the reelin-mediated signaling pathway, which regulates the migration and differentiation of postmitotic neurons during brain development. Mediates intracellular transduction of Reelin signaling following reelin (RELN)-binding to its receptor: acts by docking proteins through its phosphotyrosine residues and PID domain. This chain is Disabled homolog 1 (DAB1), found in Homo sapiens (Human).